A 572-amino-acid chain; its full sequence is Phosphoenolpyruvate-protein phosphotransferase (572 aa).

The active-site Tele-phosphohistidine intermediate is the His-190. The phosphoenolpyruvate site is built by Arg-297 and Arg-333. Residues Glu-432 and Asp-456 each coordinate Mg(2+). Phosphoenolpyruvate is bound by residues 455–456 (ND) and Arg-466. Cys-503 (proton donor) is an active-site residue.

It belongs to the PEP-utilizing enzyme family. As to quaternary structure, homodimer. The cofactor is Mg(2+).

It is found in the cytoplasm. The enzyme catalyses L-histidyl-[protein] + phosphoenolpyruvate = N(pros)-phospho-L-histidyl-[protein] + pyruvate. Its function is as follows. General (non sugar-specific) component of the phosphoenolpyruvate-dependent sugar phosphotransferase system (sugar PTS). This major carbohydrate active-transport system catalyzes the phosphorylation of incoming sugar substrates concomitantly with their translocation across the cell membrane. Enzyme I transfers the phosphoryl group from phosphoenolpyruvate (PEP) to the phosphoryl carrier protein (HPr). This chain is Phosphoenolpyruvate-protein phosphotransferase (ptsI), found in Listeria innocua serovar 6a (strain ATCC BAA-680 / CLIP 11262).